Reading from the N-terminus, the 438-residue chain is Lipoyl synthase, mitochondrial (438 aa).

Residues 1–31 (MAASARGLRTLQSAHSSTTVPRLQLAVSRCY) constitute a mitochondrion transit peptide. A compositionally biased stretch (low complexity) spans 34–57 (TTSPDPPITNSSNSSNSSNSTPTP). The segment at 34 to 58 (TTSPDPPITNSSNSSNSSNSTPTPK) is disordered. [4Fe-4S] cluster-binding residues include cysteine 148, cysteine 153, cysteine 159, cysteine 179, cysteine 183, cysteine 186, and serine 394. The region spanning 162 to 383 (GSSKSAATAT…KERALEMGFL (222 aa)) is the Radical SAM core domain.

The protein belongs to the radical SAM superfamily. Lipoyl synthase family. [4Fe-4S] cluster is required as a cofactor.

The protein localises to the mitochondrion. It catalyses the reaction [[Fe-S] cluster scaffold protein carrying a second [4Fe-4S](2+) cluster] + N(6)-octanoyl-L-lysyl-[protein] + 2 oxidized [2Fe-2S]-[ferredoxin] + 2 S-adenosyl-L-methionine + 4 H(+) = [[Fe-S] cluster scaffold protein] + N(6)-[(R)-dihydrolipoyl]-L-lysyl-[protein] + 4 Fe(3+) + 2 hydrogen sulfide + 2 5'-deoxyadenosine + 2 L-methionine + 2 reduced [2Fe-2S]-[ferredoxin]. It functions in the pathway protein modification; protein lipoylation via endogenous pathway; protein N(6)-(lipoyl)lysine from octanoyl-[acyl-carrier-protein]: step 2/2. In terms of biological role, catalyzes the radical-mediated insertion of two sulfur atoms into the C-6 and C-8 positions of the octanoyl moiety bound to the lipoyl domains of lipoate-dependent enzymes, thereby converting the octanoylated domains into lipoylated derivatives. The chain is Lipoyl synthase, mitochondrial from Paracoccidioides brasiliensis (strain Pb18).